Reading from the N-terminus, the 118-residue chain is MARIAGINIPDQKHTVIALTAIYGIGKTRAKAICVATGIAEDVKIRELSEEQIEKLREEVSKFTVEGDLRREVTLSIKRLLDLGCYRGLRHRRGLPVRGQRTKTNARTRKGPRKPIKK.

Residues 94 to 118 (GLPVRGQRTKTNARTRKGPRKPIKK) are disordered.

Belongs to the universal ribosomal protein uS13 family. Part of the 30S ribosomal subunit. Forms a loose heterodimer with protein S19. Forms two bridges to the 50S subunit in the 70S ribosome.

In terms of biological role, located at the top of the head of the 30S subunit, it contacts several helices of the 16S rRNA. In the 70S ribosome it contacts the 23S rRNA (bridge B1a) and protein L5 of the 50S subunit (bridge B1b), connecting the 2 subunits; these bridges are implicated in subunit movement. Contacts the tRNAs in the A and P-sites. This Haemophilus ducreyi (strain 35000HP / ATCC 700724) protein is Small ribosomal subunit protein uS13.